The primary structure comprises 238 residues: Ribosomal RNA small subunit methyltransferase E 1 (238 aa).

It belongs to the RNA methyltransferase RsmE family.

It localises to the cytoplasm. It carries out the reaction uridine(1498) in 16S rRNA + S-adenosyl-L-methionine = N(3)-methyluridine(1498) in 16S rRNA + S-adenosyl-L-homocysteine + H(+). Specifically methylates the N3 position of the uracil ring of uridine 1498 (m3U1498) in 16S rRNA. Acts on the fully assembled 30S ribosomal subunit. The polypeptide is Ribosomal RNA small subunit methyltransferase E 1 (rsmE1) (Borreliella burgdorferi (strain ATCC 35210 / DSM 4680 / CIP 102532 / B31) (Borrelia burgdorferi)).